Consider the following 326-residue polypeptide: Fructose-1,6-bisphosphatase class 1 2 (326 aa).

4 residues coordinate Mg(2+): Glu-84, Asp-103, Leu-105, and Asp-106. Residues 106 to 109 (DGSS), Asn-198, and Lys-262 each bind substrate. Glu-268 provides a ligand contact to Mg(2+).

This sequence belongs to the FBPase class 1 family. Homotetramer. It depends on Mg(2+) as a cofactor.

The protein resides in the cytoplasm. The enzyme catalyses beta-D-fructose 1,6-bisphosphate + H2O = beta-D-fructose 6-phosphate + phosphate. It participates in carbohydrate biosynthesis; gluconeogenesis. The protein is Fructose-1,6-bisphosphatase class 1 2 of Pseudoalteromonas translucida (strain TAC 125).